We begin with the raw amino-acid sequence, 197 residues long: Adenylate kinase (197 aa).

19–24 (GSGKGT) is a binding site for ATP. The segment at 39 to 68 (SSGDLLRAEVQSGSPKGKELKAMMERGELV) is NMP. AMP-binding positions include serine 40, arginine 45, 66-68 (ELV), 95-98 (RYPR), and glutamine 102. An LID region spans residues 132-142 (KRAETSNRVDD). Arginine 133 lines the ATP pocket. AMP-binding residues include arginine 139 and arginine 150. Glycine 178 serves as a coordination point for ATP.

The protein belongs to the adenylate kinase family. In terms of assembly, monomer.

The protein resides in the cytoplasm. The enzyme catalyses AMP + ATP = 2 ADP. Functionally, catalyzes the reversible transfer of the terminal phosphate group between ATP and AMP. Plays an important role in cellular energy homeostasis and in adenine nucleotide metabolism. This is Adenylate kinase from Schistosoma mansoni (Blood fluke).